Here is a 174-residue protein sequence, read N- to C-terminus: Large ribosomal subunit protein uL10 (174 aa).

Belongs to the universal ribosomal protein uL10 family. In terms of assembly, part of the ribosomal stalk of the 50S ribosomal subunit. The N-terminus interacts with L11 and the large rRNA to form the base of the stalk. The C-terminus forms an elongated spine to which L12 dimers bind in a sequential fashion forming a multimeric L10(L12)X complex.

Its function is as follows. Forms part of the ribosomal stalk, playing a central role in the interaction of the ribosome with GTP-bound translation factors. In Bordetella petrii (strain ATCC BAA-461 / DSM 12804 / CCUG 43448), this protein is Large ribosomal subunit protein uL10.